A 444-amino-acid chain; its full sequence is Docking protein 3 (444 aa).

Positions 7–123 constitute a PH domain; the sequence is PVKDGILYQQ…WVDPICQLAF (117 aa). Position 138 is a phosphoserine (Ser138). Residues 157–261 form the IRS-type PTB domain; that stretch reads EVTEFPVIVQ…ARQRERLPEL (105 aa). At Ser274 the chain carries Phosphoserine. The disordered stretch occupies residues 278-299; sequence LEPPGELREVAPGFELPTPRKL. Phosphoserine occurs at positions 308 and 314. Residue Tyr325 is modified to Phosphotyrosine. A disordered region spans residues 354-390; it reads GLTNGGPEAQEGPPGGRSPLGSPIYHNTEDLSWPGSA. A compositionally biased stretch (low complexity) spans 358-376; sequence GGPEAQEGPPGGRSPLGSP. At Ser371 the chain carries Phosphoserine.

The protein belongs to the DOK family. Type A subfamily. In terms of assembly, on tyrosine phosphorylation, interacts with CSK and INPP5D/SHIP1 via their SH2 domains. Both Tyr-325 and Tyr-343 are required for interaction with INPP5D. Only Tyr-325 is required for interaction with CSK. Binds ABL1 through the PTB domain and in a kinase-dependent manner. Does not interact with RasGAP. Post-translationally, constitutively tyrosine-phosphorylated. In terms of processing, on IL2 stimulation, phosphorylated on C-terminal tyrosine residues possibly by Src kinases. Can also be phosphorylated by ABL1 kinase. As to expression, predominantly expressed in bone marrow, spleen and lung. Low levels in heart, brain, liver, muscle, thymus, kidney and testis. Highly expressed in B-cells and macrophages.

The protein resides in the cytoplasm. It localises to the cell membrane. In terms of biological role, DOK proteins are enzymatically inert adaptor or scaffolding proteins. They provide a docking platform for the assembly of multimolecular signaling complexes. DOK3 is a negative regulator of JNK signaling in B-cells through interaction with INPP5D/SHIP1. May modulate ABL1 function. In Mus musculus (Mouse), this protein is Docking protein 3 (Dok3).